A 212-amino-acid chain; its full sequence is Protein GrpE (212 aa).

The disordered stretch occupies residues 1–69 (MAEMSNNKTS…LESAKKEIES (69 aa)). Residues 40-60 (ETTQTESMETAETETSLQTEL) are compositionally biased toward low complexity.

It belongs to the GrpE family. As to quaternary structure, homodimer.

The protein localises to the cytoplasm. Its function is as follows. Participates actively in the response to hyperosmotic and heat shock by preventing the aggregation of stress-denatured proteins, in association with DnaK and GrpE. It is the nucleotide exchange factor for DnaK and may function as a thermosensor. Unfolded proteins bind initially to DnaJ; upon interaction with the DnaJ-bound protein, DnaK hydrolyzes its bound ATP, resulting in the formation of a stable complex. GrpE releases ADP from DnaK; ATP binding to DnaK triggers the release of the substrate protein, thus completing the reaction cycle. Several rounds of ATP-dependent interactions between DnaJ, DnaK and GrpE are required for fully efficient folding. In Leptospira interrogans serogroup Icterohaemorrhagiae serovar Lai (strain 56601), this protein is Protein GrpE.